A 379-amino-acid polypeptide reads, in one-letter code: Cytochrome b (379 aa).

4 consecutive transmembrane segments (helical) span residues F33–M53, W77–V98, W113–L133, and F178–L198. Residues H83 and H97 each contribute to the heme b site. Heme b is bound by residues H182 and H196. Residue H201 participates in a ubiquinone binding. 4 helical membrane passes run T226–F246, L288–N308, V320–G340, and F347–P367.

This sequence belongs to the cytochrome b family. As to quaternary structure, the cytochrome bc1 complex contains 11 subunits: 3 respiratory subunits (MT-CYB, CYC1 and UQCRFS1), 2 core proteins (UQCRC1 and UQCRC2) and 6 low-molecular weight proteins (UQCRH/QCR6, UQCRB/QCR7, UQCRQ/QCR8, UQCR10/QCR9, UQCR11/QCR10 and a cleavage product of UQCRFS1). This cytochrome bc1 complex then forms a dimer. It depends on heme b as a cofactor.

Its subcellular location is the mitochondrion inner membrane. Its function is as follows. Component of the ubiquinol-cytochrome c reductase complex (complex III or cytochrome b-c1 complex) that is part of the mitochondrial respiratory chain. The b-c1 complex mediates electron transfer from ubiquinol to cytochrome c. Contributes to the generation of a proton gradient across the mitochondrial membrane that is then used for ATP synthesis. This chain is Cytochrome b (MT-CYB), found in Akodon kofordi (Koford's grass mouse).